The sequence spans 192 residues: Nucleosome assembly protein 1-like 5 (192 aa).

Over residues 1-12 (MADSQNQGSAEP) the composition is skewed to polar residues. The segment at 1–76 (MADSQNQGSA…APKPRNDFIE (76 aa)) is disordered. 2 stretches are compositionally biased toward low complexity: residues 15–28 (AAAA…AAAA) and 40–55 (GDSD…VVGQ). Residues 86-112 (VLALKKLQKRCDKIEAKFDKEFQALEK) adopt a coiled-coil conformation. The tract at residues 136 to 192 (AWTLEGDEEDDDDDEYEDEEEGEEEDEEEEEPAAEAAGTAAAKDEGPHSAVPDDAKK) is disordered. Over residues 140-168 (EGDEEDDDDDEYEDEEEGEEEDEEEEEPA) the composition is skewed to acidic residues. A compositionally biased stretch (basic and acidic residues) spans 177 to 192 (AKDEGPHSAVPDDAKK).

The protein belongs to the nucleosome assembly protein (NAP) family.

It is found in the nucleus. This Bos taurus (Bovine) protein is Nucleosome assembly protein 1-like 5 (NAP1L5).